We begin with the raw amino-acid sequence, 160 residues long: Transcription elongation factor GreA (160 aa).

The stretch at 1-72 forms a coiled coil; the sequence is MAEKTYPMTL…QISSLETKIR (72 aa).

It belongs to the GreA/GreB family.

Necessary for efficient RNA polymerase transcription elongation past template-encoded arresting sites. The arresting sites in DNA have the property of trapping a certain fraction of elongating RNA polymerases that pass through, resulting in locked ternary complexes. Cleavage of the nascent transcript by cleavage factors such as GreA or GreB allows the resumption of elongation from the new 3'terminus. GreA releases sequences of 2 to 3 nucleotides. The sequence is that of Transcription elongation factor GreA from Streptococcus pneumoniae (strain Hungary19A-6).